The sequence spans 224 residues: tRNA (guanine-N(7)-)-methyltransferase (224 aa).

S-adenosyl-L-methionine contacts are provided by glutamate 54, glutamate 79, aspartate 106, and aspartate 129. The active site involves aspartate 129. Residues lysine 133 and aspartate 165 each contribute to the substrate site.

This sequence belongs to the class I-like SAM-binding methyltransferase superfamily. TrmB family.

It carries out the reaction guanosine(46) in tRNA + S-adenosyl-L-methionine = N(7)-methylguanosine(46) in tRNA + S-adenosyl-L-homocysteine. The protein operates within tRNA modification; N(7)-methylguanine-tRNA biosynthesis. Functionally, catalyzes the formation of N(7)-methylguanine at position 46 (m7G46) in tRNA. This is tRNA (guanine-N(7)-)-methyltransferase from Chlamydia felis (strain Fe/C-56) (Chlamydophila felis).